The chain runs to 224 residues: Thiamine-phosphate synthase (224 aa).

Residues 44–48 and N79 contribute to the 4-amino-2-methyl-5-(diphosphooxymethyl)pyrimidine site; that span reads QFREK. Residues D80 and D99 each contribute to the Mg(2+) site. S117 serves as a coordination point for 4-amino-2-methyl-5-(diphosphooxymethyl)pyrimidine. Residue 143 to 145 participates in 2-[(2R,5Z)-2-carboxy-4-methylthiazol-5(2H)-ylidene]ethyl phosphate binding; the sequence is TST. Residue K146 participates in 4-amino-2-methyl-5-(diphosphooxymethyl)pyrimidine binding. Residues G175 and 195-196 contribute to the 2-[(2R,5Z)-2-carboxy-4-methylthiazol-5(2H)-ylidene]ethyl phosphate site; that span reads IS.

It belongs to the thiamine-phosphate synthase family. It depends on Mg(2+) as a cofactor.

The catalysed reaction is 2-[(2R,5Z)-2-carboxy-4-methylthiazol-5(2H)-ylidene]ethyl phosphate + 4-amino-2-methyl-5-(diphosphooxymethyl)pyrimidine + 2 H(+) = thiamine phosphate + CO2 + diphosphate. It catalyses the reaction 2-(2-carboxy-4-methylthiazol-5-yl)ethyl phosphate + 4-amino-2-methyl-5-(diphosphooxymethyl)pyrimidine + 2 H(+) = thiamine phosphate + CO2 + diphosphate. The enzyme catalyses 4-methyl-5-(2-phosphooxyethyl)-thiazole + 4-amino-2-methyl-5-(diphosphooxymethyl)pyrimidine + H(+) = thiamine phosphate + diphosphate. Its pathway is cofactor biosynthesis; thiamine diphosphate biosynthesis; thiamine phosphate from 4-amino-2-methyl-5-diphosphomethylpyrimidine and 4-methyl-5-(2-phosphoethyl)-thiazole: step 1/1. Condenses 4-methyl-5-(beta-hydroxyethyl)thiazole monophosphate (THZ-P) and 2-methyl-4-amino-5-hydroxymethyl pyrimidine pyrophosphate (HMP-PP) to form thiamine monophosphate (TMP). This chain is Thiamine-phosphate synthase, found in Bacillus cereus (strain ATCC 10987 / NRS 248).